The following is a 771-amino-acid chain: Probable exo-1,4-beta-xylosidase xlnD (771 aa).

A signal peptide spans 1-25; that stretch reads MARIMSWHYGKAITLFVCLGPVALS. N-linked (GlcNAc...) asparagine glycosylation is present at Asn-67. Asp-293 is a catalytic residue. Residues Asn-305, Asn-345, Asn-423, and Asn-464 are each glycosylated (N-linked (GlcNAc...) asparagine).

Belongs to the glycosyl hydrolase 3 family.

The protein resides in the secreted. The enzyme catalyses Hydrolysis of (1-&gt;4)-beta-D-xylans, to remove successive D-xylose residues from the non-reducing termini.. It functions in the pathway glycan degradation; xylan degradation. In terms of biological role, xylan 1,4-beta-xylosidase involved in the hydrolysis of xylan, a major structural heterogeneous polysaccharide found in plant biomass representing the second most abundant polysaccharide in the biosphere, after cellulose. This is Probable exo-1,4-beta-xylosidase xlnD (xlnD) from Neosartorya fischeri (strain ATCC 1020 / DSM 3700 / CBS 544.65 / FGSC A1164 / JCM 1740 / NRRL 181 / WB 181) (Aspergillus fischerianus).